A 54-amino-acid chain; its full sequence is UPF0391 membrane protein BMEI0373 (54 aa).

2 helical membrane passes run 5-25 (VLVF…GIAG) and 29-48 (GIAQ…SLIA).

Belongs to the UPF0391 family.

It localises to the cell membrane. This Brucella melitensis biotype 1 (strain ATCC 23456 / CCUG 17765 / NCTC 10094 / 16M) protein is UPF0391 membrane protein BMEI0373.